The primary structure comprises 184 residues: Probable gluconokinase (184 aa).

Residue 11–18 (GVSGSGKS) participates in ATP binding.

The protein belongs to the gluconokinase GntK/GntV family.

It catalyses the reaction D-gluconate + ATP = 6-phospho-D-gluconate + ADP + H(+). The protein operates within carbohydrate acid metabolism; D-gluconate degradation. This chain is Probable gluconokinase (Idnk), found in Mus musculus (Mouse).